The chain runs to 1115 residues: Phytochrome E (1115 aa).

In terms of domain architecture, GAF spans 213–383 (DIGTLCDTVV…AFSLQLYMEL (171 aa)). Phytochromobilin is bound at residue cysteine 318. A PAS 1 domain is found at 598-669 (MALELVRLVE…ALMCRALQGE (72 aa)). A PAC domain is found at 672–728 (RNVEVKLLKFGNHPTKEVVYLVVNACTSRDYKNDIIGVCFVGQDITPEKAVMDKFVR). One can recognise a PAS 2 domain in the interval 732–803 (DYEAIIQSLN…DALTKFMILL (72 aa)). The Histidine kinase domain maps to 880 to 1100 (YIQQQMKNPL…YFLIDLDFKT (221 aa)).

Belongs to the phytochrome family. As to quaternary structure, homodimer. Post-translationally, contains one covalently linked phytochromobilin chromophore.

Regulatory photoreceptor which exists in two forms that are reversibly interconvertible by light: the Pr form that absorbs maximally in the red region of the spectrum and the Pfr form that absorbs maximally in the far-red region. Photoconversion of Pr to Pfr induces an array of morphogenic responses, whereas reconversion of Pfr to Pr cancels the induction of those responses. Pfr controls the expression of a number of nuclear genes including those encoding the small subunit of ribulose-bisphosphate carboxylase, chlorophyll A/B binding protein, protochlorophyllide reductase, rRNA, etc. It also controls the expression of its own gene(s) in a negative feedback fashion. This chain is Phytochrome E (PHYE), found in Ipomoea nil (Japanese morning glory).